We begin with the raw amino-acid sequence, 395 residues long: THP3 homolog C2A9.11c (395 aa).

Residues 91–127 are disordered; the sequence is LLSEEDEVDKKEKRRRRFENGSRSQNNAKSEELKVNP. The region spanning 218–384 is the PCI domain; the sequence is DVGEYNQCQT…STDRFEKCMK (167 aa).

Belongs to the THP3 family.

The protein resides in the cytoplasm. The protein localises to the nucleus. Functionally, required for transcription elongation. May also be involved in pre-mRNA splicing. This Schizosaccharomyces pombe (strain 972 / ATCC 24843) (Fission yeast) protein is THP3 homolog C2A9.11c.